Reading from the N-terminus, the 90-residue chain is Probable Fe(2+)-trafficking protein (90 aa).

It belongs to the Fe(2+)-trafficking protein family. Monomer.

In terms of biological role, could be a mediator in iron transactions between iron acquisition and iron-requiring processes, such as synthesis and/or repair of Fe-S clusters in biosynthetic enzymes. The sequence is that of Probable Fe(2+)-trafficking protein from Edwardsiella ictaluri (strain 93-146).